Here is a 127-residue protein sequence, read N- to C-terminus: Holo-[acyl-carrier-protein] synthase (127 aa).

Mg(2+) contacts are provided by Asp-8 and Glu-56.

The protein belongs to the P-Pant transferase superfamily. AcpS family. The cofactor is Mg(2+).

It localises to the cytoplasm. It catalyses the reaction apo-[ACP] + CoA = holo-[ACP] + adenosine 3',5'-bisphosphate + H(+). In terms of biological role, transfers the 4'-phosphopantetheine moiety from coenzyme A to a Ser of acyl-carrier-protein. In Cytophaga hutchinsonii (strain ATCC 33406 / DSM 1761 / CIP 103989 / NBRC 15051 / NCIMB 9469 / D465), this protein is Holo-[acyl-carrier-protein] synthase.